The sequence spans 836 residues: CUB domain-containing protein 1 (836 aa).

A signal peptide spans 1 to 29; that stretch reads MAGLNCGVSIALLGVLLLGAARLPRGAEA. The Extracellular portion of the chain corresponds to 30–667; that stretch reads FEIALPRESN…TLTPRTVDLT (638 aa). N-linked (GlcNAc...) asparagine glycans are attached at residues N39, N122, N180, N205, N270, N310, and N386. The 128-residue stretch at 417–544 folds into the CUB domain; sequence CTDHRYCQRK…VSFIPYFKEE (128 aa). The cysteines at positions 476 and 499 are disulfide-linked. The helical transmembrane segment at 668–688 threads the bilayer; that stretch reads VILIAAVGGGVLLLSALGLII. The Cytoplasmic segment spans residues 689–836; sequence CCVKKKKKKT…NTQEPMEPAE (148 aa). Y734 carries the phosphotyrosine modification. Residues 776–836 form a disordered region; the sequence is PPTICSRAPT…NTQEPMEPAE (61 aa).

Interacts with CDH2/N-cadherin, CDH3/P-cadherin, SDC1/syndecan-1, SDC4/syndecan-4 and the serine protease ST14/MT-SP1. Also interacts with SRC and PRKCG/protein kinase C gamma. Post-translationally, phosphorylated on tyrosine by kinases of the SRC family such as SRC and YES as well as by the protein kinase C gamma/PRKCG. Dephosphorylated by phosphotyrosine phosphatases. Also phosphorylated by suramin, a heparin analog. Tyrosine phosphorylated in response to dissociation of integrin alpha-6 beta-4 from laminin-5. N-glycosylated. In terms of processing, a soluble form may also be produced by proteolytic cleavage at the cell surface (shedding). Another peptide of 80 kDa (p80) is present in cultured keratinocytes probably due to tryptic cleavage at an unidentified site on its N-terminal side. Converted to p80 by plasmin, a trypsin-like protease. Highly expressed in mitotic cells with low expression during interphase. Detected at highest levels in skeletal muscle and colon with lower levels in kidney, small intestine, placenta and lung. Up-regulated in a number of human tumor cell lines, as well as in colorectal cancer, breast carcinoma and lung cancer. Also expressed in cells with phenotypes reminiscent of mesenchymal stem cells and neural stem cells.

The protein localises to the cell membrane. Its subcellular location is the secreted. In terms of biological role, may be involved in cell adhesion and cell matrix association. May play a role in the regulation of anchorage versus migration or proliferation versus differentiation via its phosphorylation. May be a novel marker for leukemia diagnosis and for immature hematopoietic stem cell subsets. Belongs to the tetraspanin web involved in tumor progression and metastasis. The sequence is that of CUB domain-containing protein 1 (CDCP1) from Homo sapiens (Human).